The primary structure comprises 146 residues: Small ribosomal subunit protein uS13 (146 aa).

The interval 119 to 146 (ARGKKVRGQRTRSTGRKGRTVGVVRRKR) is disordered.

This sequence belongs to the universal ribosomal protein uS13 family. Part of the 30S ribosomal subunit. Forms a loose heterodimer with protein S19. Forms two bridges to the 50S subunit in the 70S ribosome.

Its function is as follows. Located at the top of the head of the 30S subunit, it contacts several helices of the 16S rRNA. In the 70S ribosome it contacts the 23S rRNA (bridge B1a) and protein L5 of the 50S subunit (bridge B1b), connecting the 2 subunits; these bridges are implicated in subunit movement. The polypeptide is Small ribosomal subunit protein uS13 (Archaeoglobus fulgidus (strain ATCC 49558 / DSM 4304 / JCM 9628 / NBRC 100126 / VC-16)).